An 86-amino-acid chain; its full sequence is Small ribosomal subunit protein bS20 (86 aa).

The segment at M1 to K25 is disordered.

Belongs to the bacterial ribosomal protein bS20 family.

Functionally, binds directly to 16S ribosomal RNA. The polypeptide is Small ribosomal subunit protein bS20 (Mycobacterium leprae (strain Br4923)).